Reading from the N-terminus, the 195-residue chain is Myelin-associated neurite-outgrowth inhibitor (195 aa).

Met-1 carries the post-translational modification N-acetylmethionine. Topologically, residues 1–18 are cytoplasmic; the sequence is MNPVYSPGSSGVPYANAK. Residue Ser-6 is modified to Phosphoserine. A helical transmembrane segment spans residues 19 to 42; sequence GIGYPAGFPMGYAAAAPAYSPNMY. Residues 43–142 are Extracellular-facing; that stretch reads PGANPTFQTG…PAPIPPPRGN (100 aa). N-linked (GlcNAc...) asparagine glycosylation is present at Asn-46. A helical membrane pass occupies residues 143-164; it reads GVTMGMVAGTTMAMSAGTLLTA. Over 165 to 195 the chain is Cytoplasmic; the sequence is HSPTPVAPHPVTVPTYRAPGTPTYSYVPPQW.

This sequence belongs to the FAM168 family. As to quaternary structure, may form homodimers. May interact with DAZAP2, FAM168A, PRDX6, RBM6, TMTC1 and YPEL2. Interacts with CDC27. N-glycosylated. As to expression, expressed in the brain, within neuronal axonal fibers and associated with myelin sheets (at protein level). Expression tends to be lower in the brain of Alzheimer disease patients compared to healthy individuals (at protein level).

It localises to the cytoplasm. The protein localises to the perinuclear region. Its subcellular location is the cell membrane. The protein resides in the cell projection. It is found in the axon. Inhibitor of neuronal axonal outgrowth. Acts as a negative regulator of CDC42 and STAT3 and a positive regulator of STMN2. Positive regulator of CDC27. The sequence is that of Myelin-associated neurite-outgrowth inhibitor (FAM168B) from Homo sapiens (Human).